The sequence spans 72 residues: Translation initiation factor IF-1 (72 aa).

One can recognise an S1-like domain in the interval 1-72; that stretch reads MAKDDVIEVE…TRGRIVWRGK (72 aa).

This sequence belongs to the IF-1 family. Component of the 30S ribosomal translation pre-initiation complex which assembles on the 30S ribosome in the order IF-2 and IF-3, IF-1 and N-formylmethionyl-tRNA(fMet); mRNA recruitment can occur at any time during PIC assembly.

The protein localises to the cytoplasm. In terms of biological role, one of the essential components for the initiation of protein synthesis. Stabilizes the binding of IF-2 and IF-3 on the 30S subunit to which N-formylmethionyl-tRNA(fMet) subsequently binds. Helps modulate mRNA selection, yielding the 30S pre-initiation complex (PIC). Upon addition of the 50S ribosomal subunit IF-1, IF-2 and IF-3 are released leaving the mature 70S translation initiation complex. This chain is Translation initiation factor IF-1, found in Caldanaerobacter subterraneus subsp. tengcongensis (strain DSM 15242 / JCM 11007 / NBRC 100824 / MB4) (Thermoanaerobacter tengcongensis).